Reading from the N-terminus, the 577-residue chain is MLCLGAMSERSERYLVTSALPYANGPLHVGHMVGAYLPADIFVRYLRMRGEDVVYVCGTDEHGVPITLTAEREGKSPREVVDYWYAHMKETFARFSISFDNFSRTSTPLHAQNTQLFYRKLKEGGYISEAESKQMYSPTEGRFLPDRYVEGTCPVCGYKEARGDQCDNCGSWYEAYELIEPHSKITGGPVEVRTTTHLYLDLPKFAGRLKDWISSQRHWREPVKNFIISMIEGGLERRPITRDISWGVPVPEPGFEDKRFYVWFDAPIGYVSSTQEWAERTGEPDRWREYWQDPGTRLIHFIGKDNTVFHTTMWPAMLMGVAEDGEEPYILPYDVPANEFMNLEVPVEGERRAVQMSTSRNLAVWLHEALDRFPADPLRFYLASTLPETGDVVFSWREFQSRVNSDLIGNLGNYINRVLSFTERYFGGTLERPSRLPAAAQEAFEDFRALEESYGRKMLDERPREAFAELLALGRRANRFFDAAAPWKTRKEDPERARADLYACCALLGSIAYHASPYVPEAMERLQGFFEGPVERITDLKPPGAYRSAGARPLFSRVEDEAVARAEEQLSRALLGR.

The 'HIGH' region motif lies at 21–31 (PYANGPLHVGH). Zn(2+) is bound by residues C153, C156, C166, and C169. Residues 355-359 (QMSTS) carry the 'KMSKS' region motif. Residue T358 coordinates ATP.

This sequence belongs to the class-I aminoacyl-tRNA synthetase family. MetG type 1 subfamily. Monomer. Zn(2+) serves as cofactor.

The protein localises to the cytoplasm. It carries out the reaction tRNA(Met) + L-methionine + ATP = L-methionyl-tRNA(Met) + AMP + diphosphate. Is required not only for elongation of protein synthesis but also for the initiation of all mRNA translation through initiator tRNA(fMet) aminoacylation. The chain is Methionine--tRNA ligase from Rubrobacter xylanophilus (strain DSM 9941 / JCM 11954 / NBRC 16129 / PRD-1).